The chain runs to 203 residues: MKSKLLRLLIVSMVTILVFSLVGLSKESSTSAKENHTFSGEDYFRGLLFGQGEVGKLISNDLDPKLVKEANSTEGKKLVNDVVKFIKKDQPQYMDELKQSIDSKDPKKLIENMTKADQLIQKYAKKNENVKYSSNKVTPSCGLYAVCVAAGYLYVVGVNAVALQTAAAVTTAVWKYVAKYSSSASNNSDLEAAAAKTLKLIHQ.

Positions 1–32 (MKSKLLRLLIVSMVTILVFSLVGLSKESSTSA) are cleaved as a signal peptide. Residues 33–140 (KENHTFSGED…KYSSNKVTPS (108 aa)) constitute a propeptide, removed in mature form. Cys141 and Cys147 are oxidised to a cystine. Positions 183-203 (SASNNSDLEAAAAKTLKLIHQ) are cleaved as a propeptide — removed in mature form.

In terms of assembly, proprotein probably interacts with chaperone CsaA. In terms of processing, production of active SDP (able to induce SdpI and kill cells) is a multi-step process that requires signal peptide cleavage (probably by SipS or SipT) as well as SdpA and SdpB. The disulfide bond is not required for maximum toxicity.

Its subcellular location is the secreted. In terms of biological role, produces a 42-residue extracellular sporulation delaying protein (SDP) that collapses the proton motive force (probably both the membrane potential and pH gradient) across the cell membrane, which leads to autolysis; may form a proton channel. Induces the lysis of other B.subtilis cells that have not entered the sporulation pathway, inducing cannibalism to provide a source of nutrients to support sporulation, and at the same time delaying commitment to the energetically expensive and irreversible onset of sporulation. Addition of SDP to liquid cultures halts growth, leads to increased cell permeability and eventually cell lysis in a significant subset of the population, although some cells survive and resume growth after a lag period. Effects of SDP are irreversible within 10 minutes. Addition of SDP to solid cultures induces killing, it is much more effective than SKF (AC O31422). Has antibiotic action against Gram-positive Firmicutes (L.acidophilus, M.megaterium, P.polymyxa, S.aureus, S.epidermidis) but not Actinobacteria M.luteus or Gram-negative P.aeruginosa or K.pneumoniae. SDP induces expression of the sdpR-sdpI operon. Its maturation is dependent on SdpA and SdpB. Also functions as a ligand, binds to SdpI triggering a signal transduction cascade that protects the cell against the toxic effects of its own SDP. This is Sporulation delaying protein C from Bacillus subtilis (strain 168).